The chain runs to 329 residues: Bifunctional muramidase/DL-endopeptidase CwlT (329 aa).

Residues 1–29 (MISKKVVLPLVFSAPFIFFFVLCIVVVMT) form the signal peptide. The muramidase stretch occupies residues 59-192 (RFRAVFEKYA…SYVDHVMRYV (134 aa)). A NlpC/P60 domain is found at 206–329 (MDFYETVMKE…DHLVSFGRIK (124 aa)). The active-site Nucleophile is Cys-237. The active-site Proton acceptor is the His-290. Residue Asn-302 is part of the active site.

It belongs to the peptidase C40 family.

It is found in the secreted. The enzyme catalyses Hydrolysis of (1-&gt;4)-beta-linkages between N-acetylmuramic acid and N-acetyl-D-glucosamine residues in a peptidoglycan and between N-acetyl-D-glucosamine residues in chitodextrins.. Functionally, exhibits both muramidase and DL-endopeptidase activities. The N-terminal region acts as a N-acetylmuramidase, which cleaves the bond between N-acetylmuramic acid and N-acetyl-D-glucosamine (MurNAc-GlcNAc) in peptidoglycan. The C-terminal region acts as a DL-endopeptidase that cleaves the bond between D-gamma-glutamate and meso-diaminopimelic acid. Cannot degrade purified B.anthracis peptidoglycan, which differ from those of B.subtilis. CwlT is required for ICEBs1 conjugation: the muramidase activity is essential, whereas the peptidase activity is partially dispensable for transfer of ICEBs1. This is Bifunctional muramidase/DL-endopeptidase CwlT from Bacillus subtilis (strain 168).